We begin with the raw amino-acid sequence, 176 residues long: NAD(P)H-quinone oxidoreductase subunit 6, chloroplastic (176 aa).

Helical transmembrane passes span 10-30 (FLLVFLGLGLILGGLGVVLLA), 33-53 (IYSAFSLGLVFVCISLFYILA), 61-81 (AQLLIYVGAINVLIIFAVMFI), 92-112 (LWTVGDGVTSVVCTSLFVSLI), and 152-172 (FFLPFEFISIILLVALIGAIA).

This sequence belongs to the complex I subunit 6 family. NDH is composed of at least 16 different subunits, 5 of which are encoded in the nucleus.

The protein localises to the plastid. Its subcellular location is the chloroplast thylakoid membrane. It carries out the reaction a plastoquinone + NADH + (n+1) H(+)(in) = a plastoquinol + NAD(+) + n H(+)(out). The catalysed reaction is a plastoquinone + NADPH + (n+1) H(+)(in) = a plastoquinol + NADP(+) + n H(+)(out). In terms of biological role, NDH shuttles electrons from NAD(P)H:plastoquinone, via FMN and iron-sulfur (Fe-S) centers, to quinones in the photosynthetic chain and possibly in a chloroplast respiratory chain. The immediate electron acceptor for the enzyme in this species is believed to be plastoquinone. Couples the redox reaction to proton translocation, and thus conserves the redox energy in a proton gradient. This chain is NAD(P)H-quinone oxidoreductase subunit 6, chloroplastic (ndhG), found in Guizotia abyssinica (Niger).